A 332-amino-acid chain; its full sequence is Nucleoid-associated protein VP2128 (332 aa).

This sequence belongs to the YejK family.

It is found in the cytoplasm. The protein resides in the nucleoid. The sequence is that of Nucleoid-associated protein VP2128 from Vibrio parahaemolyticus serotype O3:K6 (strain RIMD 2210633).